The following is a 709-amino-acid chain: PP2C-like domain-containing protein CG9801 (709 aa).

Disordered stretches follow at residues 121–222, 503–530, and 678–709; these read DCYG…NSER, LHPSTPPTRPARQSKAESPPNNAPSRPK, and GGGEEHNNGNENGDGGAISPVLQSKEFKETNF. The segment covering 130-143 has biased composition (polar residues); the sequence is PPVQVATQNSTRLT. The span at 182-196 shows a compositional bias: low complexity; it reads ANLAAASAGTDAGKA. Positions 197 to 217 are enriched in polar residues; it reads NSDQNNRNVLNAKTEVSTDGD. A PPM-type phosphatase domain is found at 259–503; sequence SVSLYETNML…KSASAIYARL (245 aa).

The polypeptide is PP2C-like domain-containing protein CG9801 (Drosophila melanogaster (Fruit fly)).